A 435-amino-acid polypeptide reads, in one-letter code: GTPase Obg (435 aa).

The Obg domain maps to 6 to 164; that stretch reads ADFVDRVKIF…RWLELELKIL (159 aa). Residues 165-335 enclose the OBG-type G domain; that stretch reads ADVGLVGYPN…LVSKLASIVR (171 aa). GTP is bound by residues 171-178, 196-200, 217-220, 287-290, and 316-318; these read GYPNVGKS, FTTLI, DIPG, NKID, and SAV. Positions 178 and 198 each coordinate Mg(2+). An OCT domain is found at 357–435; that stretch reads RRLPEKFHLE…IGDFEFEYRE (79 aa).

The protein belongs to the TRAFAC class OBG-HflX-like GTPase superfamily. OBG GTPase family. Monomer. It depends on Mg(2+) as a cofactor.

It localises to the cytoplasm. In terms of biological role, an essential GTPase which binds GTP, GDP and possibly (p)ppGpp with moderate affinity, with high nucleotide exchange rates and a fairly low GTP hydrolysis rate. Plays a role in control of the cell cycle, stress response, ribosome biogenesis and in those bacteria that undergo differentiation, in morphogenesis control. The sequence is that of GTPase Obg from Thermotoga maritima (strain ATCC 43589 / DSM 3109 / JCM 10099 / NBRC 100826 / MSB8).